A 313-amino-acid chain; its full sequence is 4-hydroxy-3-methylbut-2-enyl diphosphate reductase (313 aa).

Cys12 provides a ligand contact to [4Fe-4S] cluster. (2E)-4-hydroxy-3-methylbut-2-enyl diphosphate-binding residues include His41 and His74. Dimethylallyl diphosphate-binding residues include His41 and His74. Residues His41 and His74 each contribute to the isopentenyl diphosphate site. [4Fe-4S] cluster is bound at residue Cys96. Residue His124 coordinates (2E)-4-hydroxy-3-methylbut-2-enyl diphosphate. His124 contributes to the dimethylallyl diphosphate binding site. His124 is an isopentenyl diphosphate binding site. Glu126 (proton donor) is an active-site residue. Thr167 serves as a coordination point for (2E)-4-hydroxy-3-methylbut-2-enyl diphosphate. Cys197 contributes to the [4Fe-4S] cluster binding site. Ser225, Ser226, Asn227, and Ser269 together coordinate (2E)-4-hydroxy-3-methylbut-2-enyl diphosphate. Residues Ser225, Ser226, Asn227, and Ser269 each contribute to the dimethylallyl diphosphate site. Residues Ser225, Ser226, Asn227, and Ser269 each contribute to the isopentenyl diphosphate site.

It belongs to the IspH family. [4Fe-4S] cluster is required as a cofactor.

It catalyses the reaction isopentenyl diphosphate + 2 oxidized [2Fe-2S]-[ferredoxin] + H2O = (2E)-4-hydroxy-3-methylbut-2-enyl diphosphate + 2 reduced [2Fe-2S]-[ferredoxin] + 2 H(+). The enzyme catalyses dimethylallyl diphosphate + 2 oxidized [2Fe-2S]-[ferredoxin] + H2O = (2E)-4-hydroxy-3-methylbut-2-enyl diphosphate + 2 reduced [2Fe-2S]-[ferredoxin] + 2 H(+). It participates in isoprenoid biosynthesis; dimethylallyl diphosphate biosynthesis; dimethylallyl diphosphate from (2E)-4-hydroxy-3-methylbutenyl diphosphate: step 1/1. The protein operates within isoprenoid biosynthesis; isopentenyl diphosphate biosynthesis via DXP pathway; isopentenyl diphosphate from 1-deoxy-D-xylulose 5-phosphate: step 6/6. Its function is as follows. Catalyzes the conversion of 1-hydroxy-2-methyl-2-(E)-butenyl 4-diphosphate (HMBPP) into a mixture of isopentenyl diphosphate (IPP) and dimethylallyl diphosphate (DMAPP). Acts in the terminal step of the DOXP/MEP pathway for isoprenoid precursor biosynthesis. This is 4-hydroxy-3-methylbut-2-enyl diphosphate reductase from Photobacterium profundum (strain SS9).